A 285-amino-acid chain; its full sequence is Protoheme IX farnesyltransferase (285 aa).

7 helical membrane passes run 16-36 (AKPK…ILAF), 40-60 (WYNL…SMII), 106-126 (LLAN…YVFV), 136-156 (WLNI…GYAA), 165-185 (SLLL…ALAL), 217-237 (ILMI…YVII), and 265-285 (YKFS…SFIL).

The protein belongs to the UbiA prenyltransferase family. Protoheme IX farnesyltransferase subfamily.

It localises to the cell membrane. It carries out the reaction heme b + (2E,6E)-farnesyl diphosphate + H2O = Fe(II)-heme o + diphosphate. The protein operates within porphyrin-containing compound metabolism; heme O biosynthesis; heme O from protoheme: step 1/1. In terms of biological role, converts heme B (protoheme IX) to heme O by substitution of the vinyl group on carbon 2 of heme B porphyrin ring with a hydroxyethyl farnesyl side group. The protein is Protoheme IX farnesyltransferase of Sulfolobus acidocaldarius (strain ATCC 33909 / DSM 639 / JCM 8929 / NBRC 15157 / NCIMB 11770).